A 157-amino-acid chain; its full sequence is Cyclic pyranopterin monophosphate synthase (157 aa).

Residues 74 to 76 (MCH) and 112 to 113 (ME) contribute to the substrate site. Residue Asp127 is part of the active site.

Belongs to the MoaC family. Homohexamer; trimer of dimers.

It carries out the reaction (8S)-3',8-cyclo-7,8-dihydroguanosine 5'-triphosphate = cyclic pyranopterin phosphate + diphosphate. It participates in cofactor biosynthesis; molybdopterin biosynthesis. Catalyzes the conversion of (8S)-3',8-cyclo-7,8-dihydroguanosine 5'-triphosphate to cyclic pyranopterin monophosphate (cPMP). This is Cyclic pyranopterin monophosphate synthase from Campylobacter jejuni (strain RM1221).